The following is a 66-amino-acid chain: Large ribosomal subunit protein uL30 (66 aa).

The protein belongs to the universal ribosomal protein uL30 family. Part of the 50S ribosomal subunit.

In Chloroherpeton thalassium (strain ATCC 35110 / GB-78), this protein is Large ribosomal subunit protein uL30.